Here is a 361-residue protein sequence, read N- to C-terminus: Homer protein homolog 3 (361 aa).

The required for interaction with NFATC2 stretch occupies residues 1 to 80 (MSTAREQPIF…TKTSQKFGQW (80 aa)). One can recognise a WH1 domain in the interval 1–113 (MSTAREQPIF…EKFQEVKEAA (113 aa)). Residues 114–169 (RLAREKSQDGGELTSPALGLASHQVPPSPLVSANGPGEEKLFRSQSADAPGPTERE) are disordered. Phosphoserine is present on residues Ser120 and Ser159. Coiled-coil stretches lie at residues 191–243 (ALQD…SEVT) and 254–358 (GQSL…RLAE).

The protein belongs to the Homer family. In terms of assembly, tetramer. Isoform 1 and isoform 2 encode coiled-coil structures that mediate homo- and heteromultimerization. Interacts with NFATC2; interaction is calcium independent; interaction competes with PPP3CA for NFATC2 binding; interaction is reduced by AKT activation. Interacts with NFATC1 and NFATC4. Interacts with SHANK1; forms a high-order complex at least composed of SHANK1 and HOMER3; the complex formation is regulated by CAMK2A-mediated phosphorylation.

It localises to the cytoplasm. Its subcellular location is the postsynaptic density. The protein resides in the synapse. In terms of biological role, postsynaptic density scaffolding protein. Binds and cross-links cytoplasmic regions of GRM1, GRM5, ITPR1, DNM3, RYR1, RYR2, SHANK1 and SHANK3. By physically linking GRM1 and GRM5 with ER-associated ITPR1 receptors, it aids the coupling of surface receptors to intracellular calcium release. Isoforms can be differently regulated and may play an important role in maintaining the plasticity at glutamatergic synapses. Negatively regulates T cell activation by inhibiting the calcineurin-NFAT pathway. Acts by competing with calcineurin/PPP3CA for NFAT protein binding, hence preventing NFAT activation by PPP3CA. The chain is Homer protein homolog 3 from Homo sapiens (Human).